The chain runs to 182 residues: Heat shock protein beta-2 (182 aa).

A sHSP domain is found at 55–163 (PAGEGSRAGA…DTEVNEVYIS (109 aa)).

Belongs to the small heat shock protein (HSP20) family. As to quaternary structure, interacts with DMPK; may enhance its kinase activity. In terms of tissue distribution, expressed preferentially in skeletal muscle and heart but not in the lens.

The protein localises to the cytoplasm. It is found in the nucleus. Its function is as follows. May regulate the kinase DMPK. The sequence is that of Heat shock protein beta-2 (HSPB2) from Homo sapiens (Human).